Reading from the N-terminus, the 432-residue chain is Septin-14 (432 aa).

In terms of domain architecture, Septin-type G spans 49–315 (QGFTFNILCV…ECYRYQKLQK (267 aa)). Residues 59–66 (GETGIGKS) form a G1 motif region. Residues 59-66 (GETGIGKS), Gly-114, 195-203 (KADTISKND), Gly-249, and Arg-264 contribute to the GTP site. Residues 111 to 114 (ETVG) form a G3 motif region. Residues 194 to 197 (AKAD) form a G4 motif region. Positions 332–412 (EIFEAKRQEF…IIDFYKMKAA (81 aa)) form a coiled coil. Positions 369 to 432 (EAEKELQDKF…DTKKDKHRKK (64 aa)) are required for interaction with SEPTIN4. Required for migration of cortical neurons during corticogenesis.

This sequence belongs to the TRAFAC class TrmE-Era-EngA-EngB-Septin-like GTPase superfamily. Septin GTPase family. As to quaternary structure, septins polymerize into heterooligomeric protein complexes that form filaments, and can associate with cellular membranes, actin filaments and microtubules. GTPase activity is required for filament formation. Interacts with ACTN4. Interacts with SEPTIN9. Interacts (via C-terminus) with SEPTIN4. In terms of tissue distribution, testis-specific (at protein level).

The protein resides in the cytoplasm. Its subcellular location is the cytoskeleton. It is found in the cell projection. The protein localises to the axon. It localises to the dendrite. The protein resides in the perikaryon. Its subcellular location is the perinuclear region. It is found in the cytoplasmic vesicle. The protein localises to the secretory vesicle. It localises to the acrosome. Its function is as follows. Filament-forming cytoskeletal GTPase. Involved in the migration of cortical neurons and the formation of neuron leading processes during embryonic development. Plays a role in sperm head formation during spermiogenesis, potentially via facilitating localization of ACTN4 to cell filaments. The protein is Septin-14 of Homo sapiens (Human).